A 670-amino-acid polypeptide reads, in one-letter code: Probable potassium transport system protein Kup (670 aa).

Residues methionine 1–histidine 42 form a disordered region. Positions alanine 15–alanine 35 are enriched in low complexity. A run of 12 helical transmembrane segments spans residues leucine 51–leucine 71, valine 91–methionine 111, valine 144–proline 164, proline 180–phenylalanine 200, valine 208–valine 228, glycine 254–leucine 274, tryptophan 290–leucine 310, leucine 322–valine 342, isoleucine 380–phenylalanine 400, leucine 406–histidine 426, alanine 440–valine 460, and aspartate 464–lysine 484.

This sequence belongs to the HAK/KUP transporter (TC 2.A.72) family.

Its subcellular location is the cell inner membrane. It carries out the reaction K(+)(in) + H(+)(in) = K(+)(out) + H(+)(out). In terms of biological role, transport of potassium into the cell. Likely operates as a K(+):H(+) symporter. This Anaeromyxobacter dehalogenans (strain 2CP-C) protein is Probable potassium transport system protein Kup.